A 633-amino-acid chain; its full sequence is Probable potassium transport system protein Kup 2 (633 aa).

11 helical membrane-spanning segments follow: residues 59 to 79 (ISAILWALMVVVSLKYVILIM), 110 to 130 (ILLVGLFGAALFYGDAVLTPA), 145 to 165 (TALQPYVLPASVGVLIALFLF), 173 to 193 (IGALFGPVTIVWFLALAAAGI), 219 to 239 (GFASFAVLGAVLLAFTGAEAL), 256 to 276 (FGLVFPALALNYLGQGALIIV), 287 to 307 (LLYPSWALYPMVALATAATVI), 345 to 365 (IYIPTLNGMLLVAVLVAVLGF), 374 to 394 (AYGVAVTGTMLVTTLLTFFVI), 402 to 422 (LLLSLVATGFFIAVDMAFVSS), and 429 to 449 (EGGWFPLVVGAGIFVVMLTWV).

The protein belongs to the HAK/KUP transporter (TC 2.A.72) family.

The protein resides in the cell inner membrane. The enzyme catalyses K(+)(in) + H(+)(in) = K(+)(out) + H(+)(out). Functionally, transport of potassium into the cell. Likely operates as a K(+):H(+) symporter. The polypeptide is Probable potassium transport system protein Kup 2 (Cupriavidus necator (strain ATCC 17699 / DSM 428 / KCTC 22496 / NCIMB 10442 / H16 / Stanier 337) (Ralstonia eutropha)).